A 232-amino-acid polypeptide reads, in one-letter code: MSVFRSIRDGVVPIHKEGYPFIVAFFVASLILGWIWDPLFWFGLVLTVWCIYFFRDPERVTPMNADWVVSPADGRISFVGLCVPPEELDLGKNEMMRVSVFMDVFSCHINRAPVSGTIESIVYSPGKFVNADLDKASEFNERNGVVIDSKHGKIGVVQIAGLVARRIICWSKEDDSVAAGQRFGMIRFGSRLDVYMPAEIKLRVAVGQTSIAGETVLGSFDSDITTTDFRLN.

S190 functions as the Schiff-base intermediate with substrate; via pyruvic acid in the catalytic mechanism. At S190 the chain carries Pyruvic acid (Ser); by autocatalysis.

Belongs to the phosphatidylserine decarboxylase family. PSD-A subfamily. As to quaternary structure, heterodimer of a large membrane-associated beta subunit and a small pyruvoyl-containing alpha subunit. The cofactor is pyruvate. Post-translationally, is synthesized initially as an inactive proenzyme. Formation of the active enzyme involves a self-maturation process in which the active site pyruvoyl group is generated from an internal serine residue via an autocatalytic post-translational modification. Two non-identical subunits are generated from the proenzyme in this reaction, and the pyruvate is formed at the N-terminus of the alpha chain, which is derived from the carboxyl end of the proenzyme. The post-translation cleavage follows an unusual pathway, termed non-hydrolytic serinolysis, in which the side chain hydroxyl group of the serine supplies its oxygen atom to form the C-terminus of the beta chain, while the remainder of the serine residue undergoes an oxidative deamination to produce ammonia and the pyruvoyl prosthetic group on the alpha chain.

Its subcellular location is the cell membrane. The enzyme catalyses a 1,2-diacyl-sn-glycero-3-phospho-L-serine + H(+) = a 1,2-diacyl-sn-glycero-3-phosphoethanolamine + CO2. It functions in the pathway phospholipid metabolism; phosphatidylethanolamine biosynthesis; phosphatidylethanolamine from CDP-diacylglycerol: step 2/2. Functionally, catalyzes the formation of phosphatidylethanolamine (PtdEtn) from phosphatidylserine (PtdSer). In Bartonella bacilliformis (strain ATCC 35685 / KC583 / Herrer 020/F12,63), this protein is Phosphatidylserine decarboxylase proenzyme.